The primary structure comprises 237 residues: Ribosomal RNA small subunit methyltransferase G (237 aa).

S-adenosyl-L-methionine-binding positions include Gly-78, Phe-83, 129 to 130 (AE), and Arg-148.

This sequence belongs to the methyltransferase superfamily. RNA methyltransferase RsmG family.

It is found in the cytoplasm. Its function is as follows. Specifically methylates the N7 position of a guanine in 16S rRNA. This Streptococcus thermophilus (strain CNRZ 1066) protein is Ribosomal RNA small subunit methyltransferase G.